The following is a 156-amino-acid chain: Low molecular weight protein-tyrosine-phosphatase YfkJ (156 aa).

Catalysis depends on C8, which acts as the Nucleophile. R14 is a catalytic residue. Catalysis depends on D125, which acts as the Proton donor.

This sequence belongs to the low molecular weight phosphotyrosine protein phosphatase family.

It carries out the reaction O-phospho-L-tyrosyl-[protein] + H2O = L-tyrosyl-[protein] + phosphate. Its activity is regulated as follows. Efficiently inhibited by Cu(2+) ion, Zn(2+) ion and N-ethylmaleimide, while the addition of Mg(2+), Ca(2+) or Fe(3+) ions has minimal effect. Inhibited in a competitive manner by vanadate. Dephosphorylates the phosphotyrosine-containing proteins. Involved in ethanol stress resistance. In Bacillus subtilis (strain 168), this protein is Low molecular weight protein-tyrosine-phosphatase YfkJ (yfkJ).